Consider the following 400-residue polypeptide: Gap junction alpha-8 protein (400 aa).

An intramembrane segment occupies 2–12 (GDWSFLGNILE). Over 13-21 (QVNEQSTVI) the chain is Cytoplasmic. The helical transmembrane segment at 22–42 (GRVWLTVLFIFRILILGTAAE) threads the bilayer. The Extracellular portion of the chain corresponds to 43–71 (LVWGDEQSDFVCNTQQPGCENVCYDEAFP). Cystine bridges form between cysteine 54–cysteine 196, cysteine 61–cysteine 190, and cysteine 65–cysteine 185. The chain crosses the membrane as a helical span at residues 72 to 92 (ISHIRLWVLQIIFVSTPSLVY). At 93–156 (FGHAVHHVRM…GTLLRTYILH (64 aa)) the chain is on the cytoplasmic side. Positions 104 to 118 (EKRKEREEAERRQQA) are enriched in basic and acidic residues. The interval 104–139 (EKRKEREEAERRQQAEVDEEKLPLAPNQNKGNNPDG) is disordered. Residues 129–138 (PNQNKGNNPD) show a composition bias toward polar residues. Residues 157 to 177 (IIFKTLFEVGFIVGQYFLYGF) traverse the membrane as a helical segment. At 178-205 (RILPLYRCGRWPCPNLVDCFVSRPTEKT) the chain is on the extracellular side. Residues 206 to 226 (IFIMFMLVVAAVSLFLNLVEI) traverse the membrane as a helical segment. Over 227-400 (SHLILKRIRR…SRARSDDLTV (174 aa)) the chain is Cytoplasmic. The segment at 323-400 (YAQAKEPEEE…SRARSDDLTV (78 aa)) is disordered. Positions 327–336 (KEPEEEKVKA) are enriched in basic and acidic residues. Acidic residues predominate over residues 337-346 (EEEEEQEEEQ). Serine 364 carries the phosphoserine; by CK2 modification. A compositionally biased stretch (low complexity) spans 381–392 (RSLSRLSKASSR).

This sequence belongs to the connexin family. Alpha-type (group II) subfamily. In terms of assembly, a hemichannel or connexon is composed of a hexamer of connexins. A functional gap junction is formed by the apposition of two hemichannels. Forms heteromeric channels with GJA3. During early stages of lens development, interacts with the C-terminus of MIP. Proteolytically cleaved by caspase-3 during lens development. Post-translationally, phosphorylated on Ser-364; which inhibits cleavage by caspase-3.

Its subcellular location is the cell membrane. The protein resides in the cell junction. The protein localises to the gap junction. Functionally, structural component of eye lens gap junctions. Gap junctions are dodecameric channels that connect the cytoplasm of adjoining cells. They are formed by the docking of two hexameric hemichannels, one from each cell membrane. Small molecules and ions diffuse from one cell to a neighboring cell via the central pore. The polypeptide is Gap junction alpha-8 protein (GJA8) (Gallus gallus (Chicken)).